A 471-amino-acid chain; its full sequence is Intraflagellar transport protein 46 homolog (471 aa).

Disordered regions lie at residues 1–202 (MSSE…SNMR) and 226–246 (SRLEDDSSNDDDDDDDDEDDD). Composition is skewed to acidic residues over residues 89-99 (SEPQEVIDVND) and 231-246 (DSSNDDDDDDDDEDDD).

This sequence belongs to the IFT46 family. Component of the IFT complex B composed of at least che-2, che-13, dyf-1, dyf-3, dyf-6, dyf-11, dyf-13, ift-20, ift-74, ift-81, ifta-2, osm-1, osm-5 and osm-6. In terms of tissue distribution, expressed in the hypodermis and sensory neurons including inner labial, PDE, amphid and phasmid neurons.

The protein localises to the cell projection. It is found in the cilium. It localises to the cytoplasm. The protein resides in the cytoskeleton. Its subcellular location is the cilium basal body. The protein localises to the dendrite. It is found in the perikaryon. Component of the intraflagellar transport (IFT) complex B required for transport of proteins in the motile cilium. May be required for ciliary entrance and transport of specific ciliary cargo proteins such as che-3 which are related to motility. Required for normal morphology and function of ciliated amphid sensory neurons. This Caenorhabditis elegans protein is Intraflagellar transport protein 46 homolog.